A 525-amino-acid polypeptide reads, in one-letter code: Vesicular inhibitory amino acid transporter (525 aa).

Topologically, residues 1–132 are cytoplasmic; sequence MATLLRSKLS…WNVTNAIQGM (132 aa). A disordered region spans residues 83–107; the sequence is IHYQRGSGAPLPPSGSKDQVGGGGE. The chain crosses the membrane as a helical span at residues 133–153; that stretch reads FVLGLPYAILHGGYLGLFLII. At 154–204 the chain is on the lumenal, vesicle side; sequence FAAVVCCYTGKILIACLYEENEDGEVVRVRDSYVAIANACCAPRFPTLGGR. Y186 carries the post-translational modification 3'-nitrotyrosine. A helical membrane pass occupies residues 205–225; that stretch reads VVNVAQIIELVMTCILYVVVS. Residues 226-265 lie on the Cytoplasmic side of the membrane; sequence GNLMYNSFPGLPVSQKSWSIIATAVLLPCAFLKNLKAVSK. A helical membrane pass occupies residues 266-286; sequence FSLLCTLAHFVINILVIAYCL. The Lumenal, vesicle segment spans residues 287-305; sequence SRARDWAWEKVKFYIDVKK. Residues 306–326 traverse the membrane as a helical segment; the sequence is FPISIGIIVFSYTSQIFLPSL. Over 327–341 the chain is Cytoplasmic; the sequence is EGNMQQPSEFHCMMN. A helical membrane pass occupies residues 342–362; it reads WTHIAACVLKGLFALVAYLTW. At 363 to 383 the chain is on the lumenal, vesicle side; it reads ADETKEVITDNLPGSIRAVVN. A helical transmembrane segment spans residues 384–404; it reads IFLVAKALLSYPLPFFAAVEV. Residues 405-438 are Cytoplasmic-facing; sequence LEKSLFQEGSRAFFPACYSGDGRLKSWGLTLRCA. A helical transmembrane segment spans residues 439–459; sequence LVVFTLLMAIYVPHFALLMGL. The Lumenal, vesicle segment spans residues 460-461; that stretch reads TG. The chain crosses the membrane as a helical span at residues 462–482; that stretch reads SLTGAGLCFLLPSLFHLRLLW. Over 483 to 489 the chain is Cytoplasmic; it reads RKLLWHQ. A helical transmembrane segment spans residues 490 to 510; the sequence is VFFDVAIFVIGGICSVSGFVH. At 511-525 the chain is on the lumenal, vesicle side; it reads SLEGLIEAYRTNAED.

This sequence belongs to the amino acid/polyamine transporter 2 family. As to expression, retina. Expressed throughout the horizontal cells or more specifically at the terminals.

The protein resides in the cytoplasmic vesicle membrane. It localises to the presynapse. It carries out the reaction 4-aminobutanoate(out) + n H(+)(in) = 4-aminobutanoate(in) + n H(+)(out). The catalysed reaction is glycine(out) + n H(+)(in) = glycine(in) + n H(+)(out). It catalyses the reaction beta-alanine(out) + n H(+)(in) = beta-alanine(in) + n H(+)(out). In terms of biological role, antiporter that exchanges vesicular protons for cytosolic 4-aminobutanoate or to a lesser extend glycine, thus allowing their secretion from nerve terminals. The transport is equally dependent on the chemical and electrical components of the proton gradient. May also transport beta-alanine. Acidification of GABAergic synaptic vesicles is a prerequisite for 4-aminobutanoate uptake. This Homo sapiens (Human) protein is Vesicular inhibitory amino acid transporter.